Reading from the N-terminus, the 174-residue chain is Guided entry of tail-anchored proteins factor 1 (174 aa).

Residues 1 to 8 (MSAAEADR) are Lumenal-facing. Residues 9-29 (WAWLLVLSFVFGCNVLRILLP) form a helical membrane-spanning segment. Residues 30–99 (SFSFFMSRVL…VKARTAQLAK (70 aa)) are Cytoplasmic-facing. A coiled-coil region spans residues 39–94 (LQKDAEQESQMRAEIQGMKQELSTVNMMDEFARYARLERKINKMTDKLKTHVKART). Positions 39-97 (LQKDAEQESQMRAEIQGMKQELSTVNMMDEFARYARLERKINKMTDKLKTHVKARTAQL) are interaction with GET3/TRC40. A helical membrane pass occupies residues 100–120 (IKWVISVAFYILQAALMVSLI). At 121 to 148 (WKYYSVPVAVVPSKWITPLDRLVAFPTR) the chain is on the lumenal side. The helical transmembrane segment at 149 to 169 (VAGGVGITCWILVCNKVVAIV) threads the bilayer. The Cytoplasmic portion of the chain corresponds to 170-174 (LHPFS).

It belongs to the WRB/GET1 family. As to quaternary structure, component of the Golgi to ER traffic (GET) complex, which is composed of GET1/WRB, CAMLG/GET2 and GET3. Within the complex, GET1 and CAMLG form a heterotetramer which is stabilized by phosphatidylinositol binding and which binds to the GET3 homodimer. Interacts with CAMLG (via C-terminus). GET3 shows a higher affinity for CAMLG than for GET1.

It localises to the endoplasmic reticulum membrane. Required for the post-translational delivery of tail-anchored (TA) proteins to the endoplasmic reticulum. Together with CAMLG/GET2, acts as a membrane receptor for soluble GET3/TRC40, which recognizes and selectively binds the transmembrane domain of TA proteins in the cytosol. Required to ensure correct topology and ER insertion of CAMLG. This is Guided entry of tail-anchored proteins factor 1 from Bos taurus (Bovine).